We begin with the raw amino-acid sequence, 299 residues long: uncharacterized protein (299 aa).

This is an uncharacterized protein from Archaeoglobus fulgidus (strain ATCC 49558 / DSM 4304 / JCM 9628 / NBRC 100126 / VC-16).